Reading from the N-terminus, the 170-residue chain is Large ribosomal subunit protein bL17 (170 aa).

Belongs to the bacterial ribosomal protein bL17 family. Part of the 50S ribosomal subunit. Contacts protein L32.

This chain is Large ribosomal subunit protein bL17, found in Azobacteroides pseudotrichonymphae genomovar. CFP2.